A 331-amino-acid chain; its full sequence is Biotin synthase (331 aa).

Residues 46–275 (YYGKKVKLNM…TKEIRISGGR (230 aa)) enclose the Radical SAM core domain. 3 residues coordinate [4Fe-4S] cluster: Cys64, Cys68, and Cys71. Residues Cys108, Cys140, Cys200, and Arg270 each coordinate [2Fe-2S] cluster.

This sequence belongs to the radical SAM superfamily. Biotin synthase family. In terms of assembly, homodimer. Requires [4Fe-4S] cluster as cofactor. [2Fe-2S] cluster is required as a cofactor.

The catalysed reaction is (4R,5S)-dethiobiotin + (sulfur carrier)-SH + 2 reduced [2Fe-2S]-[ferredoxin] + 2 S-adenosyl-L-methionine = (sulfur carrier)-H + biotin + 2 5'-deoxyadenosine + 2 L-methionine + 2 oxidized [2Fe-2S]-[ferredoxin]. It participates in cofactor biosynthesis; biotin biosynthesis; biotin from 7,8-diaminononanoate: step 2/2. In terms of biological role, catalyzes the conversion of dethiobiotin (DTB) to biotin by the insertion of a sulfur atom into dethiobiotin via a radical-based mechanism. This Lysinibacillus sphaericus (strain C3-41) protein is Biotin synthase.